Consider the following 318-residue polypeptide: tRNA-dihydrouridine(16) synthase (318 aa).

FMN contacts are provided by residues 7-9 (PME) and Gln68. The active-site Proton donor is the Cys98. Residues Lys139, 200–202 (NGE), and 224–225 (CR) contribute to the FMN site.

The protein belongs to the Dus family. DusC subfamily. The cofactor is FMN.

The enzyme catalyses 5,6-dihydrouridine(16) in tRNA + NADP(+) = uridine(16) in tRNA + NADPH + H(+). It carries out the reaction 5,6-dihydrouridine(16) in tRNA + NAD(+) = uridine(16) in tRNA + NADH + H(+). Its function is as follows. Catalyzes the synthesis of 5,6-dihydrouridine (D), a modified base found in the D-loop of most tRNAs, via the reduction of the C5-C6 double bond in target uridines. Specifically modifies U16 in tRNAs. This chain is tRNA-dihydrouridine(16) synthase, found in Vibrio vulnificus (strain CMCP6).